The chain runs to 180 residues: Bifunctional protein PyrR (180 aa).

Positions 101–113 (VILIDDVLFTGRT) match the PRPP-binding motif.

Belongs to the purine/pyrimidine phosphoribosyltransferase family. PyrR subfamily. Homodimer and homohexamer; in equilibrium.

It catalyses the reaction UMP + diphosphate = 5-phospho-alpha-D-ribose 1-diphosphate + uracil. Regulates transcriptional attenuation of the pyrimidine nucleotide (pyr) operon by binding in a uridine-dependent manner to specific sites on pyr mRNA. This disrupts an antiterminator hairpin in the RNA and favors formation of a downstream transcription terminator, leading to a reduced expression of downstream genes. Functionally, also displays a weak uracil phosphoribosyltransferase activity which is not physiologically significant. In Oceanobacillus iheyensis (strain DSM 14371 / CIP 107618 / JCM 11309 / KCTC 3954 / HTE831), this protein is Bifunctional protein PyrR.